A 163-amino-acid polypeptide reads, in one-letter code: Transcriptional repressor NrdR (163 aa).

A zinc finger spans residues 3 to 34; sequence CPFCRHDDSRVVDSRTTDDGSSIRRRRQCPNC. Residues 46-136 enclose the ATP-cone domain; that stretch reads LSVIKRSGAP…VYQAFDSLAD (91 aa).

Belongs to the NrdR family. Zn(2+) is required as a cofactor.

Negatively regulates transcription of bacterial ribonucleotide reductase nrd genes and operons by binding to NrdR-boxes. The polypeptide is Transcriptional repressor NrdR (Kineococcus radiotolerans (strain ATCC BAA-149 / DSM 14245 / SRS30216)).